We begin with the raw amino-acid sequence, 660 residues long: Pseudouridylate synthase 7 homolog (660 aa).

A disordered region spans residues 1-99; sequence MEMTSTSLKR…EAGEEEEAES (99 aa). The residue at position 7 (Ser7) is a Phosphoserine. The span at 22–32 shows a compositional bias: basic and acidic residues; that stretch reads TPHDETKKQKV. Residues 76-99 are compositionally biased toward acidic residues; sequence QEEEEEEEEEDGLSEAGEEEEAES. Phosphoserine is present on Ser126. The active-site Nucleophile is the Asp293. A TRUD domain is found at 369–579; it reads GFINYYGMQR…SGAYRRIIIR (211 aa).

Belongs to the pseudouridine synthase TruD family. As to quaternary structure, interacts with SIRT1.

It localises to the nucleus. The enzyme catalyses a uridine in tRNA = a pseudouridine in tRNA. The catalysed reaction is uridine(13) in tRNA = pseudouridine(13) in tRNA. It catalyses the reaction a uridine in mRNA = a pseudouridine in mRNA. Functionally, pseudouridylate synthase that catalyzes pseudouridylation of RNAs. Acts as a regulator of protein synthesis in embryonic stem cells by mediating pseudouridylation of RNA fragments derived from tRNAs (tRFs): pseudouridylated tRFs inhibit translation by targeting the translation initiation complex. Also catalyzes pseudouridylation of mRNAs: mediates pseudouridylation of mRNAs with the consensus sequence 5'-UGUAG-3'. Acts as a regulator of pre-mRNA splicing by mediating pseudouridylation of pre-mRNAs at locations associated with alternatively spliced regions. Pseudouridylation of pre-mRNAs near splice sites directly regulates mRNA splicing and mRNA 3'-end processing. In addition to mRNAs and tRNAs, binds other types of RNAs, such as snRNAs, Y RNAs and vault RNAs, suggesting that it can catalyze pseudouridylation of many RNA types. In Mus musculus (Mouse), this protein is Pseudouridylate synthase 7 homolog.